The following is a 288-amino-acid chain: Syntaxin-1A (288 aa).

The span at 1–13 (MKDRTQELRTAKD) shows a compositional bias: basic and acidic residues. The interval 1–20 (MKDRTQELRTAKDSDDDDDV) is disordered. Over 1 to 265 (MKDRTQELRT…KYQSKARRKK (265 aa)) the chain is Cytoplasmic. Phosphoserine occurs at positions 14, 64, and 95. The stretch at 68-109 (DEKTKEELEELMSDIKKTANKVRSKLKSIEQSIEQEEGLNRS) forms a coiled coil. Ser-188 bears the Phosphoserine; by DAPK1 mark. The 63-residue stretch at 192–254 (LSEIETRHSE…ERAVSDTKKA (63 aa)) folds into the t-SNARE coiled-coil homology domain. Residues Lys-252, Lys-253, and Lys-256 each participate in a glycyl lysine isopeptide (Lys-Gly) (interchain with G-Cter in SUMO) cross-link. The chain crosses the membrane as a helical; Anchor for type IV membrane protein span at residues 266-288 (IMIIICCVILGIIIASTIGGIFG).

The protein belongs to the syntaxin family. In terms of assembly, part of the SNARE core complex containing SNAP25, VAMP2 and STX1A; this complex constitutes the basic catalytic machinery of the complex neurotransmitter release apparatus. The SNARE complex interacts with CPLX1. Interacts with STXBP1. The interaction with STXBP1 promotes assembly of the SNARE complex. Interacts (via C-terminus) with KCNB1 (via C-terminus); the interaction increases in a calcium-dependent manner and induces a pore-independent enhancement of exocytosis in neuroendocrine cells, chromaffin cells, pancreatic beta cells and from the soma of dorsal root ganglia (DRG) neurons. Interacts with SYTL4. Interacts with STXBP6. Interacts with PLCL1 (via C2 domain). Interacts with OTOF. Interacts with LGI3. Interacts (via the H3 domain) with SLC6A4 (via the N-terminus); this interaction regulates SLC4A6 channel conductance in thalamocortical neurons. Interacts with SYT6 and SYT8; the interaction is Ca(2+)-dependent. Interacts with VAMP8. Interacts with SNAP23. Interacts with VAPA and SYBU. Interacts with PRRT2. Interacts with SEPT8. Interacts with STXBP5L. Interacts with synaptotagmin-1/SYT1. Interacts with SEPTIN5; in the cerebellar cortex. Interacts with SEPTIN4; in the striatum. In terms of processing, phosphorylated by CK2. Phosphorylation at Ser-188 by DAPK1 significantly decreases its interaction with STXBP1. Post-translationally, (Microbial infection) Targeted and hydrolyzed by C.botulinum neurotoxin type C (BoNT/C), which hydrolyzes the 253-Lys-|-Ala-254 bond. Cleavage inhibits neurotransmitter release. Phosphorylated by CK2. Phosphorylation at Ser-188 by DAPK1 significantly decreases its interaction with STXBP1. In terms of processing, sumoylated, sumoylation is required for regulation of synaptic vesicle endocytosis. As to expression, expressed predominantly in cerebral cortex, hippocampus, cerebellum, adrenal medulla and retina with weak expression detected in non-neuronal tissues.

Its subcellular location is the cytoplasmic vesicle. The protein resides in the secretory vesicle. It localises to the synaptic vesicle membrane. The protein localises to the cell membrane. It is found in the synapse. Its subcellular location is the synaptosome. Plays an essential role in hormone and neurotransmitter calcium-dependent exocytosis and endocytosis. Part of the SNARE (Soluble NSF Attachment Receptor) complex composed of SNAP25, STX1A and VAMP2 which mediates the fusion of synaptic vesicles with the presynaptic plasma membrane. STX1A and SNAP25 are localized on the plasma membrane while VAMP2 resides in synaptic vesicles. The pairing of the three SNAREs from the N-terminal SNARE motifs to the C-terminal anchors leads to the formation of the SNARE complex, which brings membranes into close proximity and results in final fusion. Participates in the calcium-dependent regulation of acrosomal exocytosis in sperm. Also plays an important role in the exocytosis of hormones such as insulin or glucagon-like peptide 1 (GLP-1). This is Syntaxin-1A (Stx1a) from Rattus norvegicus (Rat).